The primary structure comprises 176 residues: R-phycoerythrin beta chain (176 aa).

The phycourobilin site is built by cysteine 50 and cysteine 61. Position 72 is an N4-methylasparagine (asparagine 72). Residues cysteine 82 and cysteine 158 each contribute to the (2R,3E)-phycoerythrobilin site.

The protein belongs to the phycobiliprotein family. In terms of assembly, heterodimer of an alpha and a beta chain. Post-translationally, contains two covalently linked phycoerythrobilin chromophores and one covalently linked phycourobilin chromophore.

It is found in the plastid. Its subcellular location is the chloroplast thylakoid membrane. Light-harvesting photosynthetic bile pigment-protein from the phycobiliprotein complex. This is R-phycoerythrin beta chain (cpeB) from Aglaothamnion neglectum (Red alga).